An 821-amino-acid polypeptide reads, in one-letter code: Cell wall integrity transcriptional regulator CAS5 (821 aa).

Disordered regions lie at residues 42 to 66 (HLQSLQQQSQVQSQAPQQVQSLNQH), 219 to 245 (FESPQSHIQSQPSYSQGYHNQNSLSTP), 305 to 432 (TKSN…STSQ), 544 to 576 (QEEEQEHQDEQMEIDSFESNEKNARPTLSTSSL), and 607 to 750 (VKQE…KHKC). The span at 222–245 (PQSHIQSQPSYSQGYHNQNSLSTP) shows a compositional bias: polar residues. A compositionally biased stretch (low complexity) spans 305–318 (TKSNSTSSYNSTLN). Residues 319 to 329 (PFYTPSQQLSS) show a composition bias toward polar residues. Positions 372-387 (QLRKAKSYTSLLRKKK) are enriched in basic residues. Residues 396–412 (QNQQHQQQQQQQQQQQQ) show a composition bias toward low complexity. A compositionally biased stretch (polar residues) spans 422–432 (QNLSFPNSTSQ). Over residues 545 to 561 (EEEQEHQDEQMEIDSFE) the composition is skewed to acidic residues. Composition is skewed to low complexity over residues 662–674 (LVNKGNKTNNNDT) and 684–693 (KNTNGNGNND). Over residues 694 to 714 (NDNDSEENNDNVDDADDDDDG) the composition is skewed to acidic residues. C2H2-type zinc fingers lie at residues 748-770 (HKCPICESRFQRPEHVKRHLKSH) and 776-801 (FECQMPNCGKRFNRKDNLKAHLKKIH). A Phosphoserine modification is found at Ser769.

Phosphorylation at Ser-769 and probably additional serine residues. GLC7 dephosphorylates CAS5 in response to cell wall stress which leads to its translocation to the nucleus.

Its subcellular location is the nucleus. The protein localises to the cytoplasm. Functionally, transcription factor that acts with ADA2 to promote cell wall integrity. Regulates the expression of target genes in concert with the transcriptional regulators SWI4 and SWI6. Crucial for proper cell cycle dynamics and responses to echinocandins, which inhibit beta-1,3-glucan synthesis. Has distinct transcriptional targets under basal and stress conditions. Also regulates a transcriptional network that influences the response to fluconazole. Plays a key role in adherence, hyphal development, and virulence. Acts as a repressor of hypha-specific genes during yeast-form growth. This chain is Cell wall integrity transcriptional regulator CAS5, found in Candida albicans (strain SC5314 / ATCC MYA-2876) (Yeast).